We begin with the raw amino-acid sequence, 210 residues long: Glycerol-3-phosphate acyltransferase (210 aa).

The next 5 membrane-spanning stretches (helical) occupy residues Ala10 to Ile30, Pro59 to Ala79, Ala87 to Phe107, Phe116 to Leu136, and Leu161 to Ile181.

It belongs to the PlsY family. As to quaternary structure, probably interacts with PlsX.

The protein localises to the cell inner membrane. The enzyme catalyses an acyl phosphate + sn-glycerol 3-phosphate = a 1-acyl-sn-glycero-3-phosphate + phosphate. It functions in the pathway lipid metabolism; phospholipid metabolism. Functionally, catalyzes the transfer of an acyl group from acyl-phosphate (acyl-PO(4)) to glycerol-3-phosphate (G3P) to form lysophosphatidic acid (LPA). This enzyme utilizes acyl-phosphate as fatty acyl donor, but not acyl-CoA or acyl-ACP. In Cereibacter sphaeroides (strain ATCC 17025 / ATH 2.4.3) (Rhodobacter sphaeroides), this protein is Glycerol-3-phosphate acyltransferase.